The chain runs to 356 residues: S-adenosylmethionine:tRNA ribosyltransferase-isomerase (356 aa).

This sequence belongs to the QueA family. Monomer.

The protein localises to the cytoplasm. The catalysed reaction is 7-aminomethyl-7-carbaguanosine(34) in tRNA + S-adenosyl-L-methionine = epoxyqueuosine(34) in tRNA + adenine + L-methionine + 2 H(+). It participates in tRNA modification; tRNA-queuosine biosynthesis. Functionally, transfers and isomerizes the ribose moiety from AdoMet to the 7-aminomethyl group of 7-deazaguanine (preQ1-tRNA) to give epoxyqueuosine (oQ-tRNA). The protein is S-adenosylmethionine:tRNA ribosyltransferase-isomerase of Escherichia coli (strain ATCC 8739 / DSM 1576 / NBRC 3972 / NCIMB 8545 / WDCM 00012 / Crooks).